The primary structure comprises 168 residues: Plasma membrane-associated cation-binding protein 2 (168 aa).

The N-myristoyl glycine moiety is linked to residue G2. Repeat copies occupy residues 26-30, 69-73, 94-99, 103-107, 110-115, 118-122, and 124-129. The 7 X 5 AA approximate repeats of V-E-E-K-K stretch occupies residues 26–129; sequence VEEEKPREVE…EKKPVEEEKK (104 aa). Residues 56–77 are a coiled coil; that stretch reads EEIIATGEKEIEIVEEKKEEAK. Positions 88–131 are enriched in basic and acidic residues; the sequence is EEKKPAVEEEKKTAPVEEKKPAVEEEKKPAVEEKKPVEEEKKEV. Positions 88 to 168 are disordered; sequence EEKKPAVEEE…ETPAAAPQKA (81 aa). A compositionally biased stretch (low complexity) spans 152 to 168; the sequence is ETPAKAPETPAAAPQKA.

This sequence belongs to the DREPP family. In terms of assembly, binds microtubules. Interacts with calcium ion Ca(2+), calmodulin and some phosphatidylinositol phosphates (PtdInsPs) such as phosphatidylinositol 3,5-bisphosphate [PtdIns(3,5)P(2)], PtdIns(4,5)P(2) and PtdIns(3,4,5)P(3). Requires Cu(2+) as cofactor. Mostly expressed in the expanding cells, specifically in roots (except in root tips) and flowers (at protein level). Also detected in cotyledons, hypocotyls and trichome stalks.

Its subcellular location is the cell membrane. The protein localises to the cytoplasm. The protein resides in the cytoskeleton. Functionally, may be involved in intracellular signaling through interaction with PtdInsPs and calmodulin (CaM); may keep PtdInsPs attached to the plasma membrane until Ca(2+)-CaM reaches a competitive concentration subsequent to an increase triggered by a stimulus, thus leading to PtdInsPs release and subsequent activation of InsPs-dependent signaling cascade. Binds to microtubules and inhibits tubulin polymerization. Regulates directional cell growth and cortical microtubule organization by destabilizing microtubules (e.g. in cotyledon pavement cells). This is Plasma membrane-associated cation-binding protein 2 from Arabidopsis thaliana (Mouse-ear cress).